Reading from the N-terminus, the 152-residue chain is Superoxide dismutase [Cu-Zn] 1 (152 aa).

Cu cation contacts are provided by histidine 45, histidine 47, and histidine 62. A disulfide bridge connects residues cysteine 56 and cysteine 145. Histidine 62, histidine 70, histidine 79, and aspartate 82 together coordinate Zn(2+). Histidine 119 provides a ligand contact to Cu cation.

The protein belongs to the Cu-Zn superoxide dismutase family. Homodimer. Cu cation serves as cofactor. The cofactor is Zn(2+).

It localises to the cytoplasm. The catalysed reaction is 2 superoxide + 2 H(+) = H2O2 + O2. Its function is as follows. Destroys radicals which are normally produced within the cells and which are toxic to biological systems. This is Superoxide dismutase [Cu-Zn] 1 (SODCC.1) from Mesembryanthemum crystallinum (Common ice plant).